A 784-amino-acid chain; its full sequence is Cadherin-5 (784 aa).

Residues 1 to 25 form the signal peptide; the sequence is MQRLMMLLATSGACLGLLAVAAVAA. Residues 26–47 constitute a propeptide that is removed on maturation; that stretch reads AGANPAQRDTHSLLPTHRRQKR. 5 Cadherin domains span residues 48 to 151, 152 to 258, 259 to 372, 373 to 477, and 478 to 593; these read DWIW…WPVF, THRL…FPFF, TQTK…PPIF, QQPF…DNAP, and EFAK…MAAQ. Residues 48-599 are Extracellular-facing; sequence DWIWNQMHID…MAAQVGVSIQ (552 aa). Positions 58 and 59 each coordinate Ca(2+). A glycan (N-linked (GlcNAc...) (complex) asparagine) is linked at Asn61. The Ca(2+) site is built by Asp109 and Glu111. N-linked (GlcNAc...) (complex) asparagine glycosylation occurs at Asn112. Asp143, Val144, Asn145, Asp146, and Asn147 together coordinate Ca(2+). An N-linked (GlcNAc...) asparagine glycan is attached at Asn157. Ca(2+)-binding residues include Asp177, Asp179, His186, and Asp231. Asn362 carries an N-linked (GlcNAc...) asparagine glycan. Asn442 is a glycosylation site (N-linked (GlcNAc...) (complex) asparagine). Asn523 and Asn535 each carry an N-linked (GlcNAc...) asparagine glycan. Residues 600–620 form a helical membrane-spanning segment; the sequence is AVVAILLCILTITVITLLIFL. Residues 621-660 form a required for interaction with PALS1 region; that stretch reads RRRLRKQARAHGKSVPEIHEQLVTYDEEGGGEMDTTSYDV. At 621 to 784 the chain is on the cytoplasmic side; sequence RRRLRKQARA…GSDPREELLY (164 aa).

Part of a complex composed of AMOTL2, MAGI1 and CDH5, within the complex AMOTL2 acts as a scaffold protein for the interaction of MAGI1 with CDH5. The complex is required for coupling actin fibers to cell junctions in endothelial cells. Within the complex AMOTL2 (via its N-terminus) interacts with CDH5. Interacts (via cadherin 5 domain) with PTPRB. Interacts with TRPC4. Interacts with KRIT1. Interacts with PARD3. Interacts with RTN4 (isoform B). Interacts with PALS1; the interaction promotes PALS1 localization to cell junctions and is required for CDH5-mediated vascular lumen formation and endothelial cell. Interacts with CTNND1/p120-catenin; the interaction controls CADH5 endocytosis. Phosphorylated on tyrosine residues by KDR/VEGFR-2. Dephosphorylated by PTPRB. Post-translationally, O-glycosylated. In terms of tissue distribution, expressed in endothelial cells (at protein level). Expressed in the brain.

Its subcellular location is the cell junction. The protein localises to the adherens junction. It is found in the cell membrane. The protein resides in the cytoplasm. Its function is as follows. Cadherins are calcium-dependent cell adhesion proteins. They preferentially interact with themselves in a homophilic manner in connecting cells; cadherins may thus contribute to the sorting of heterogeneous cell types. This cadherin may play a important role in endothelial cell biology through control of the cohesion and organization of the intercellular junctions. It associates with alpha-catenin forming a link to the cytoskeleton. Plays a role in coupling actin fibers to cell junctions in endothelial cells, via acting as a cell junctional complex anchor for AMOTL2 and MAGI1. Acts in concert with KRIT1 and PALS1 to establish and maintain correct endothelial cell polarity and vascular lumen. These effects are mediated by recruitment and activation of the Par polarity complex and RAP1B. Required for activation of PRKCZ and for the localization of phosphorylated PRKCZ, PARD3, TIAM1 and RAP1B to the cell junction. Associates with CTNND1/p120-catenin to control CADH5 endocytosis. The protein is Cadherin-5 of Homo sapiens (Human).